We begin with the raw amino-acid sequence, 113 residues long: Protein translation factor SUI1 homolog 2 (113 aa).

Residue Ser2 is modified to N-acetylserine.

Belongs to the SUI1 family.

Functionally, probably involved in translation. The chain is Protein translation factor SUI1 homolog 2 from Arabidopsis thaliana (Mouse-ear cress).